The following is a 264-amino-acid chain: Probable pectate lyase D (264 aa).

The signal sequence occupies residues 1–17; sequence MFFKQLAVLSFATSALA. Asn-60 is a glycosylation site (N-linked (GlcNAc...) asparagine). Positions 234-264 are disordered; that stretch reads YEGTDNNDEEPQEISTGPSNACQYTDPLPSC. Residues 235–245 show a composition bias toward acidic residues; it reads EGTDNNDEEPQ. Over residues 246–256 the composition is skewed to polar residues; sequence EISTGPSNACQ.

Belongs to the polysaccharide lyase 3 family. Ca(2+) is required as a cofactor.

The protein resides in the secreted. The enzyme catalyses Eliminative cleavage of (1-&gt;4)-alpha-D-galacturonan to give oligosaccharides with 4-deoxy-alpha-D-galact-4-enuronosyl groups at their non-reducing ends.. Pectinolytic enzyme consist of four classes of enzymes: pectin lyase, polygalacturonase, pectin methylesterase and rhamnogalacturonase. Among pectinolytic enzymes, pectin lyase is the most important in depolymerization of pectin, since it cleaves internal glycosidic bonds of highly methylated pectins. Favors pectate, the anion, over pectin, the methyl ester. This chain is Probable pectate lyase D (plyD), found in Emericella nidulans (strain FGSC A4 / ATCC 38163 / CBS 112.46 / NRRL 194 / M139) (Aspergillus nidulans).